Consider the following 222-residue polypeptide: DNA ADP-ribosyl transferase (222 aa).

The DarT domain maps to 12 to 209 (TLIYHITHLN…PVRVRRSWYY (198 aa)). Residues 16 to 18 (HIT), Gly-25, and Leu-33 contribute to the NAD(+) site. The interval 38 to 56 (RPPTQQNVAYGHIQAHRAQ) is NAD(+)-binding element. The DNA-binding element occupies 47–53 (YGHIQAH). NAD(+) is bound at residue Arg-54. The active-site Proton acceptor is Arg-54. DNA-binding regions lie at residues 78-83 (RSPMLY), 148-151 (SYWA), and 154-158 (REKKQ). Residues 119–160 (TDRHAAVQYVCFFHKLEHLKALDWQAIQASYWANVREKKQAE) form an ADP-ribosylating turn-turn loop region. The active site involves Glu-160.

The protein belongs to the DarT ADP-ribosyltransferase family. As to quaternary structure, interacts with cognate antitoxin DarG (via C-terminus); this heterodimeric complex neutralizes the toxic effect of DarT by preventing ssDNA binding to DarT and consequently inactivating the toxin by direct protein-protein interactions.

The enzyme catalyses a thymidine in DNA + NAD(+) = an N-(ADP-alpha-D-ribosyl)-thymidine in DNA + nicotinamide + H(+). Toxic component of the hybrid type II/IV toxin-antitoxin (TA) system DarTG, which plays a crucial role in controlling bacterial growth and bacteriophage infection. Its toxic effect is neutralized by cognate antitoxin DarG. In case of phage infection, DarT toxin ADP-ribosylates DNA, which inhibits both viral DNA and RNA synthesis and leads to abortive infection. ADP-ribosylates ssDNA on the second thymidine of the consensus sequence 5'-TNTC-3'; the protein does not auto-modify. Has no activity on dsDNA in vitro. This leads to a decrease in DNA replication. Upon expression in E.coli inhibits cell growth, colony formation and induces the SOS response. Expression leads to bacteriostasis; however if cells grow over an hour in the presence of toxin, growth is no longer restored on antitoxin-inducing plates. In E.coli ADP-ribosylates genomic DNA (gDNA), which induces RecA expression (a marker for DNA damage). In Thermus aquaticus (strain ATCC BAA-2747 / Y51MC23), this protein is DNA ADP-ribosyl transferase.